The sequence spans 313 residues: MTRLSILLLLISLVYSTPYPQTQISKKIGDDATLSCSRNNINDYVVMSAWYKEPNSIILLAAKSDVLYFDNYTKDKISYDSPYDDLVTTITIKSLTAKDAGTYVCAFFMTSTTNDTDKVDYEEYSTELIVNTDSESTIDIILSGSSHSPETSSEKPDYINNFNCSLVFEIATPGPITDNVENHTDTVTYTSDIINTVSTSSRESTTVKTSGPITNKEDHTVTDTVSYTTVSTSSEIVTTKSTANDAHNDNEPSTVSPTTVKNITKSIGKYSTKDYVKVFGIAALIILSAVAIFCITYYICNKRSRKYKTENKV.

The signal sequence occupies residues 1–16 (MTRLSILLLLISLVYS). The Virion surface portion of the chain corresponds to 17-277 (TPYPQTQISK…GKYSTKDYVK (261 aa)). In terms of domain architecture, Ig-like V-type spans 18–121 (PYPQTQISKK…TTNDTDKVDY (104 aa)). A disulfide bond links Cys-36 and Cys-105. N-linked (GlcNAc...) asparagine; by host glycans are attached at residues Asn-71, Asn-114, Asn-163, Asn-182, and Asn-262. The helical transmembrane segment at 278–301 (VFGIAALIILSAVAIFCITYYICN) threads the bilayer. The Intravirion segment spans residues 302 to 313 (KRSRKYKTENKV).

The protein belongs to the orthopoxvirus OPG185 family. Heterodimerizes with OPG040. The heterodimer OPG185-OPG040 interacts with components of the entry fusion complex OPG143 and OPG094. Heterodimer with C3/VPC protein; disulfide-linked. Glycosylated; contains phosphate and sulfate-substituted glycans. O-glycosylation is required for hemagglutination and hemadsorption activities of infected cell membranes.

The protein resides in the virion membrane. Its subcellular location is the host membrane. Functionally, prevents cell to cell fusion by interacting with and directing the viral OPG040 protein on the host plasma membrane. The OPG185-OPG040 complex associates with components of the entry fusion complex (EFC) presumably to avoid superinfection and syncytium formation. Via its interaction with C3/VCP protein, protects the infected cell and probably also the extracellular enveloped virus from complement attack. This Homo sapiens (Human) protein is Protein OPG185 (OPG185).